Consider the following 184-residue polypeptide: Chromobox protein homolog hpl-1 (184 aa).

The segment covering Met-1–Asn-13 has biased composition (polar residues). Disordered stretches follow at residues Met-1 to Pro-27 and Ala-87 to Asp-115. The Chromo domain maps to Phe-37–Arg-95. Over residues Pro-99–Asp-115 the composition is skewed to polar residues.

As to quaternary structure, interacts with histone demethylase spr-5. Interacts with chromobox protein homolog hpl-2. Interacts with histone H3 tails methylated at 'Lys-9' (H3K9me3) and 'Lys-23'(H3K23me2). Interacts with histone H1 variant his-24 (when monomethylated at 'Lys-14'); the interaction is direct. May interact with the REST corepressor rcor-1, histone deacetylase hda-1, and the histone demethylase lsd-1.

Its subcellular location is the nucleus. Seems to be involved in transcriptional silencing in heterochromatin-like complexes. Involved in epigenetic repression. Probably does not act as global transcriptional repressor. Plays a role in linking epigenetic regulation with the innate immune response. Acting in concert with chromobox protein homolog hpl-2 and histone H1 protein his-24, involved in reproduction, somatic gonad development, male tail development and vulval cell fate decisions; perhaps as a result of modulating expression of Hox genes mab-5 and egl-5. Role in growth and somatic gonad development is antagonized by histone-lysine N-methyltransferase set-2/SET1. Required for larval development, acting redundantly with hpl-2. Plays a role in the formation of the vulva and in fertility, acting together with a CoREST-like complex, and hpl-2. This chain is Chromobox protein homolog hpl-1, found in Caenorhabditis elegans.